The following is a 385-amino-acid chain: uncharacterized protein (385 aa).

D180, H258, and H275 together coordinate Zn(2+).

This sequence belongs to the iron-containing alcohol dehydrogenase family. It depends on Zn(2+) as a cofactor.

This is an uncharacterized protein from Synechocystis sp. (strain ATCC 27184 / PCC 6803 / Kazusa).